A 417-amino-acid chain; its full sequence is Phosphoglycerate kinase 1 (417 aa).

(2R)-3-phosphoglycerate is bound by residues Val23, Asp24, Phe25, Asn26, Asn38, Arg39, Ser62, His63, Gly65, Arg66, Leu121, Arg122, His168, and Arg169. Gly212 provides a ligand contact to ADP. CDP is bound at residue Gly212. The AMP site is built by Ala213 and Lys214. Ala213 contacts ATP. Residue Ala213 participates in Mg(2+) binding. Asp217 is a binding site for CDP. Asp217 lines the Mg(2+) pocket. Position 218 (Lys218) interacts with AMP. Lys218 contributes to the ATP binding site. Residue Gly236 participates in ADP binding. A CDP-binding site is contributed by Gly236. Residues Gly237 and Gly311 each contribute to the AMP site. ATP-binding residues include Gly237 and Gly311. The CDP site is built by Gly336 and Phe341. Phe341 contributes to the ADP binding site. Glu342 contacts AMP. The ATP site is built by Glu342, Asp374, and Thr375. Asp374 is a Mg(2+) binding site.

Belongs to the phosphoglycerate kinase family. In terms of assembly, monomer. Requires Mg(2+) as cofactor.

It localises to the cytoplasm. Its subcellular location is the mitochondrion. It catalyses the reaction (2R)-3-phosphoglycerate + ATP = (2R)-3-phospho-glyceroyl phosphate + ADP. It participates in carbohydrate degradation; glycolysis; pyruvate from D-glyceraldehyde 3-phosphate: step 2/5. Its function is as follows. Catalyzes one of the two ATP producing reactions in the glycolytic pathway via the reversible conversion of 1,3-diphosphoglycerate to 3-phosphoglycerate. Both L- and D- forms of purine and pyrimidine nucleotides can be used as substrates, but the activity is much lower on pyrimidines. Negatively regulates the biosynthesis of acetyl-CoA from pyruvate in the mitochondrion. In Rhizopus niveus, this protein is Phosphoglycerate kinase 1 (PGK1).